Here is a 108-residue protein sequence, read N- to C-terminus: UPF0060 membrane protein BH2744 (108 aa).

4 helical membrane-spanning segments follow: residues 6-26 (TLFLLAGLAEIGGGYLIWLWL), 31-51 (PVYLGLFGAVALALYGVIATF), 60-80 (VYAAYGGVFIFLAVLWGWWID), and 86-106 (TYDWIGAVICLVGVGIMLWAP).

The protein belongs to the UPF0060 family.

It is found in the cell membrane. The sequence is that of UPF0060 membrane protein BH2744 from Halalkalibacterium halodurans (strain ATCC BAA-125 / DSM 18197 / FERM 7344 / JCM 9153 / C-125) (Bacillus halodurans).